A 218-amino-acid chain; its full sequence is Small ribosomal subunit protein uS3c (218 aa).

In terms of domain architecture, KH type-2 spans 47–118; the sequence is VQKNIRISSG…KLNIAITRIS (72 aa).

The protein belongs to the universal ribosomal protein uS3 family. As to quaternary structure, part of the 30S ribosomal subunit.

Its subcellular location is the plastid. The protein resides in the chloroplast. This is Small ribosomal subunit protein uS3c (rps3) from Arabis hirsuta (Hairy rock-cress).